Here is a 231-residue protein sequence, read N- to C-terminus: Lytic polysaccharide monooxygenase-like protein X325 (231 aa).

A signal peptide spans 1-17 (MRLSLLVTLALTALIEA). Histidine 18 is a binding site for Cu(2+). 6 N-linked (GlcNAc...) asparagine glycosylation sites follow: asparagine 34, asparagine 55, asparagine 98, asparagine 133, asparagine 174, and asparagine 180. 2 disulfide bridges follow: cysteine 47–cysteine 157 and cysteine 122–cysteine 178. Isoleucine 202 carries GPI-anchor amidated isoleucine lipidation. Residues 203-231 (ASTTTGSAPRYYSWAGWLPLVAGAIWMAL) constitute a propeptide, removed in mature form.

Belongs to the X325 family. The cofactor is Cu(2+).

The protein localises to the cell membrane. In terms of biological role, lytic polysaccharide monooxygenase-like protein that has diverged to biological functions other than polysaccharide degradation since it does not perform oxidative cleavage of polysaccharides. Acts as a cell surface-bound protein that functions in the copper-accumulation pathway. May also act as the major cell wall sensor that regulates MAP kinase-dependent hyphal anastomosis, the fusion of hyphal cells. The polypeptide is Lytic polysaccharide monooxygenase-like protein X325 (Hypocrea jecorina (strain QM6a) (Trichoderma reesei)).